The sequence spans 586 residues: Ezrin (586 aa).

Residues 2-295 (PKPINVRVTT…GNHELYMRRR (294 aa)) enclose the FERM domain. At lysine 60 the chain carries N6-acetyllysine. Residues 115–120 (IYCPPE) carry the [IL]-x-C-x-x-[DE] motif motif. At tyrosine 146 the chain carries Phosphotyrosine; by PDGFR. The tract at residues 244 to 586 (EIRNISFNDK…KQRIDEFEAM (343 aa)) is interaction with SCYL3. The stretch at 302-462 (VQQMKAQARE…QDDLVKTKEE (161 aa)) forms a coiled coil. A disordered region spans residues 306-338 (KAQAREEKHQKQLERQQLETEKKRRETVEREKE). The span at 308–338 (QAREEKHQKQLERQQLETEKKRRETVEREKE) shows a compositional bias: basic and acidic residues. Serine 366 is modified (phosphoserine). At tyrosine 478 the chain carries Phosphotyrosine. Serine 535 carries the post-translational modification Phosphoserine. Threonine 567 carries the phosphothreonine; by ROCK2 and PKC/PRKCI modification.

In terms of assembly, interacts with PODXL and NHERF2. Found in a complex with EZR, PODXL and NHERF2. Interacts with PALS1. Interacts with MCC, PLEKHG6, SCYL3/PACE1, NHERF1 and TMEM8B. Interacts (when phosphorylated) with FES/FPS. Interacts with dimeric S100P, the interaction may be activating through unmasking of F-actin binding sites. Identified in complexes that contain VIM, EZR, AHNAK, BFSP1, BFSP2, ANK2, PLEC, PRX and spectrin. Detected in a complex composed of at least EZR, AHNAK, PPL and PRX. Interacts with PDPN (via cytoplasmic domain); activates RHOA and promotes epithelial-mesenchymal transition. Interacts with SPN/CD43 cytoplasmic tail, CD44 and ICAM2. Interacts with SLC9A3; interaction targets SLC9A3 to the apical membrane. Interacts with SLC9A1; regulates interactions of SLC9A1 with cytoskeletal and promotes stress fiber formation. Interacts with CLIC5; may work together in a complex which also includes RDX and MYO6 to stabilize linkages between the plasma membrane and subjacent actin cytoskeleton at the base of stereocilia. Phosphorylated by tyrosine-protein kinases. Phosphorylation by ROCK2 suppresses the head-to-tail association of the N-terminal and C-terminal halves resulting in an opened conformation which is capable of actin and membrane-binding. In terms of processing, S-nitrosylation is induced by interferon-gamma and oxidatively-modified low-densitity lipoprotein (LDL(ox)) possibly implicating the iNOS-S100A8/9 transnitrosylase complex. Glomerular epithelium cell (podocyte). Expressed in cerebrum, cerebellum and hippocampus (at protein level). Expressed in the small intestine, lung, kidney and ovaries.

The protein localises to the apical cell membrane. It is found in the cell projection. The protein resides in the microvillus membrane. Its subcellular location is the ruffle membrane. It localises to the cytoplasm. The protein localises to the cell cortex. It is found in the cytoskeleton. The protein resides in the microvillus. Its activity is regulated as follows. A head-to-tail association, of the N-terminal and C-terminal halves results in a closed conformation (inactive form) which is incapable of actin or membrane-binding. Functionally, probably involved in connections of major cytoskeletal structures to the plasma membrane. In epithelial cells, required for the formation of microvilli and membrane ruffles on the apical pole. Along with PLEKHG6, required for normal macropinocytosis. The polypeptide is Ezrin (Ezr) (Rattus norvegicus (Rat)).